A 232-amino-acid polypeptide reads, in one-letter code: NAD(P)H-hydrate epimerase (232 aa).

The YjeF N-terminal domain occupies 9–219 (AISVDEELFN…KLQDKYAMEL (211 aa)). Residue 62 to 66 (NNGGD) participates in (6S)-NADPHX binding. K(+) is bound by residues Asn-63 and Asp-127. (6S)-NADPHX is bound by residues 131–137 (GFSFKPP) and Asp-160. Ser-163 contacts K(+).

The protein belongs to the NnrE/AIBP family. K(+) is required as a cofactor.

The enzyme catalyses (6R)-NADHX = (6S)-NADHX. It carries out the reaction (6R)-NADPHX = (6S)-NADPHX. Functionally, catalyzes the epimerization of the S- and R-forms of NAD(P)HX, a damaged form of NAD(P)H that is a result of enzymatic or heat-dependent hydration. This is a prerequisite for the S-specific NAD(P)H-hydrate dehydratase to allow the repair of both epimers of NAD(P)HX. The protein is NAD(P)H-hydrate epimerase of Aedes aegypti (Yellowfever mosquito).